A 188-amino-acid chain; its full sequence is dCTP deaminase (188 aa).

DCTP contacts are provided by residues 111-116, 135-137, Gln-156, Tyr-170, Lys-179, and Gln-180; these read KSTYAR and TLE. Glu-137 (proton donor/acceptor) is an active-site residue.

It belongs to the dCTP deaminase family. Homotrimer.

It catalyses the reaction dCTP + H2O + H(+) = dUTP + NH4(+). It functions in the pathway pyrimidine metabolism; dUMP biosynthesis; dUMP from dCTP (dUTP route): step 1/2. In terms of biological role, catalyzes the deamination of dCTP to dUTP. This Rickettsia typhi (strain ATCC VR-144 / Wilmington) protein is dCTP deaminase.